Consider the following 469-residue polypeptide: Protein RUFY3 (469 aa).

A phosphothreonine mark is found at Thr-5 and Thr-12. 2 positions are modified to phosphoserine: Ser-34 and Ser-49. Thr-51 carries the post-translational modification Phosphothreonine. In terms of domain architecture, RUN spans 95 to 227 (DSDYAPLQQF…IDANFCMKGE (133 aa)). 2 coiled-coil regions span residues 271–362 (NRHL…VEKE) and 422–463 (KSEL…AANK).

As to quaternary structure, interacts with PAK1. Interacts (via C-terminus) with Ras-related Rab-5 proteins. Interacts (via C-terminus) with Ras-related Rap-2 proteins. Interacts with PIK3CA and PIK3R1. Interacts (via N-terminus) with FSCN1; this interaction induces neuron axon development. Interacts with DBN1. Interacts (via the second coiled coil) with GTP-, but not GDP-bound ARL8A and ARL8B. Interacts with dynactin/DCTN1 and the dynein intermediate chain DYNC1I1/2. Directly interacts with DYNC1LI1. Isoform 1 is partially phosphorylated. Phosphorylated by PAK1. In terms of tissue distribution, expressed in brain (at protein level).

Its subcellular location is the cytoplasm. The protein resides in the endomembrane system. The protein localises to the cell projection. It localises to the invadopodium. It is found in the growth cone. Its subcellular location is the perikaryon. The protein resides in the filopodium. The protein localises to the lamellipodium. It localises to the lysosome. Its function is as follows. ARL8 effector that promotes the coupling of endolysosomes to dynein-dynactin for retrograde transport along microtubules. Acts by binding both GTP-bound ARL8 and dynein-dynactin. In nonneuronal cells, promotes concentration of endolysosomes in the juxtanuclear area. In hippocampal neurons, drives retrograde transport of endolysosomes from the axon to the soma. Plays a role in the generation of neuronal polarity formation and axon growth. Implicated in the formation of a single axon by developing neurons. May inhibit the formation of additional axons by inhibition of PI3K in minor neuronal processes. Plays a role in the formation of F-actin-enriched protrusive structures at the cell periphery. Plays a role in cytoskeletal organization by regulating the subcellular localization of FSCN1 and DBN1 at axonal growth cones. This chain is Protein RUFY3, found in Rattus norvegicus (Rat).